The chain runs to 196 residues: dTTP/UTP pyrophosphatase (196 aa).

Asp-72 serves as the catalytic Proton acceptor.

This sequence belongs to the Maf family. YhdE subfamily. It depends on a divalent metal cation as a cofactor.

It localises to the cytoplasm. It carries out the reaction dTTP + H2O = dTMP + diphosphate + H(+). It catalyses the reaction UTP + H2O = UMP + diphosphate + H(+). Functionally, nucleoside triphosphate pyrophosphatase that hydrolyzes dTTP and UTP. May have a dual role in cell division arrest and in preventing the incorporation of modified nucleotides into cellular nucleic acids. The chain is dTTP/UTP pyrophosphatase from Chlamydia felis (strain Fe/C-56) (Chlamydophila felis).